We begin with the raw amino-acid sequence, 347 residues long: Phosphate acyltransferase (347 aa).

The protein belongs to the PlsX family. In terms of assembly, homodimer. Probably interacts with PlsY.

It localises to the cytoplasm. It carries out the reaction a fatty acyl-[ACP] + phosphate = an acyl phosphate + holo-[ACP]. It participates in lipid metabolism; phospholipid metabolism. Its function is as follows. Catalyzes the reversible formation of acyl-phosphate (acyl-PO(4)) from acyl-[acyl-carrier-protein] (acyl-ACP). This enzyme utilizes acyl-ACP as fatty acyl donor, but not acyl-CoA. In Oleidesulfovibrio alaskensis (strain ATCC BAA-1058 / DSM 17464 / G20) (Desulfovibrio alaskensis), this protein is Phosphate acyltransferase.